A 508-amino-acid chain; its full sequence is Photosystem II CP47 reaction center protein (508 aa).

Helical transmembrane passes span 21 to 36 (SVHI…WAGS), 101 to 115 (IVFS…IWHW), 140 to 156 (GIHL…FGAF), 203 to 218 (IAAG…FHLS), 237 to 252 (VLSS…AFVV), and 457 to 472 (TFAL…HGAR).

It belongs to the PsbB/PsbC family. PsbB subfamily. In terms of assembly, PSII is composed of 1 copy each of membrane proteins PsbA, PsbB, PsbC, PsbD, PsbE, PsbF, PsbH, PsbI, PsbJ, PsbK, PsbL, PsbM, PsbT, PsbX, PsbY, PsbZ, Psb30/Ycf12, at least 3 peripheral proteins of the oxygen-evolving complex and a large number of cofactors. It forms dimeric complexes. The cofactor is Binds multiple chlorophylls. PSII binds additional chlorophylls, carotenoids and specific lipids..

It localises to the plastid. It is found in the chloroplast thylakoid membrane. Functionally, one of the components of the core complex of photosystem II (PSII). It binds chlorophyll and helps catalyze the primary light-induced photochemical processes of PSII. PSII is a light-driven water:plastoquinone oxidoreductase, using light energy to abstract electrons from H(2)O, generating O(2) and a proton gradient subsequently used for ATP formation. In Calycanthus floridus var. glaucus (Eastern sweetshrub), this protein is Photosystem II CP47 reaction center protein.